The chain runs to 162 residues: MNVTATARSLLLTEFVSAFFLAMRYFFKPKPTINYPFEKNPISPRFRGEHALRRYPNGEERCIACKLCEAVCPAQAITIEAGPRRNDGTRRTVRYDIDMVKCIYCGFCQEACPVDAIVEGPNFEFATETREELYYDKARLLANGDRWEREIAKAISLDAPYR.

4Fe-4S ferredoxin-type domains are found at residues 52–82 (LRRY…IEAG) and 93–122 (VRYD…EGPN). The [4Fe-4S] cluster site is built by Cys-62, Cys-65, Cys-68, Cys-72, Cys-102, Cys-105, Cys-108, and Cys-112.

The protein belongs to the complex I 23 kDa subunit family. NDH-1 is composed of 14 different subunits. Subunits NuoA, H, J, K, L, M, N constitute the membrane sector of the complex. Requires [4Fe-4S] cluster as cofactor.

It localises to the cell inner membrane. It carries out the reaction a quinone + NADH + 5 H(+)(in) = a quinol + NAD(+) + 4 H(+)(out). Functionally, NDH-1 shuttles electrons from NADH, via FMN and iron-sulfur (Fe-S) centers, to quinones in the respiratory chain. The immediate electron acceptor for the enzyme in this species is believed to be ubiquinone. Couples the redox reaction to proton translocation (for every two electrons transferred, four hydrogen ions are translocated across the cytoplasmic membrane), and thus conserves the redox energy in a proton gradient. The sequence is that of NADH-quinone oxidoreductase subunit I 1 from Rhodopseudomonas palustris (strain ATCC BAA-98 / CGA009).